A 313-amino-acid polypeptide reads, in one-letter code: Aspartate carbamoyltransferase catalytic subunit (313 aa).

Residues Arg-59 and Thr-60 each contribute to the carbamoyl phosphate site. Lys-87 lines the L-aspartate pocket. Positions 109, 137, and 140 each coordinate carbamoyl phosphate. Positions 170 and 224 each coordinate L-aspartate. Residues Gly-265 and Pro-266 each coordinate carbamoyl phosphate.

It belongs to the aspartate/ornithine carbamoyltransferase superfamily. ATCase family. In terms of assembly, heterododecamer (2C3:3R2) of six catalytic PyrB chains organized as two trimers (C3), and six regulatory PyrI chains organized as three dimers (R2).

It carries out the reaction carbamoyl phosphate + L-aspartate = N-carbamoyl-L-aspartate + phosphate + H(+). Its pathway is pyrimidine metabolism; UMP biosynthesis via de novo pathway; (S)-dihydroorotate from bicarbonate: step 2/3. In terms of biological role, catalyzes the condensation of carbamoyl phosphate and aspartate to form carbamoyl aspartate and inorganic phosphate, the committed step in the de novo pyrimidine nucleotide biosynthesis pathway. This chain is Aspartate carbamoyltransferase catalytic subunit, found in Sinorhizobium medicae (strain WSM419) (Ensifer medicae).